A 305-amino-acid polypeptide reads, in one-letter code: GTPase Era (305 aa).

One can recognise an Era-type G domain in the interval 11–181 (RSGFVSFVGR…IKVMTDLLPE (171 aa)). The G1 stretch occupies residues 19-26 (GRPNTGKS). Position 19–26 (19–26 (GRPNTGKS)) interacts with GTP. Residues 45–49 (ETTRH) are G2. Residues 66–69 (DTPG) form a G3 region. GTP-binding positions include 66 to 70 (DTPGL) and 130 to 133 (TKAD). A G4 region spans residues 130 to 133 (TKAD). Positions 160 to 162 (VSS) are G5. The KH type-2 domain maps to 212 to 291 (LKNELPHSVA…FLDLRIKVLK (80 aa)).

Belongs to the TRAFAC class TrmE-Era-EngA-EngB-Septin-like GTPase superfamily. Era GTPase family. In terms of assembly, monomer.

Its subcellular location is the cytoplasm. It is found in the cell membrane. Its function is as follows. An essential GTPase that binds both GDP and GTP, with rapid nucleotide exchange. Plays a role in 16S rRNA processing and 30S ribosomal subunit biogenesis and possibly also in cell cycle regulation and energy metabolism. The sequence is that of GTPase Era from Corynebacterium glutamicum (strain ATCC 13032 / DSM 20300 / JCM 1318 / BCRC 11384 / CCUG 27702 / LMG 3730 / NBRC 12168 / NCIMB 10025 / NRRL B-2784 / 534).